The chain runs to 140 residues: Nucleoside diphosphate kinase (140 aa).

The ATP site is built by lysine 11, phenylalanine 59, arginine 87, threonine 93, arginine 104, and asparagine 114. Histidine 117 serves as the catalytic Pros-phosphohistidine intermediate.

This sequence belongs to the NDK family. Homotetramer. It depends on Mg(2+) as a cofactor.

The protein localises to the cytoplasm. It catalyses the reaction a 2'-deoxyribonucleoside 5'-diphosphate + ATP = a 2'-deoxyribonucleoside 5'-triphosphate + ADP. The enzyme catalyses a ribonucleoside 5'-diphosphate + ATP = a ribonucleoside 5'-triphosphate + ADP. Functionally, major role in the synthesis of nucleoside triphosphates other than ATP. The ATP gamma phosphate is transferred to the NDP beta phosphate via a ping-pong mechanism, using a phosphorylated active-site intermediate. This chain is Nucleoside diphosphate kinase, found in Jannaschia sp. (strain CCS1).